A 62-amino-acid chain; its full sequence is UPF0434 protein RHECIAT_CH0004260 (62 aa).

This sequence belongs to the UPF0434 family.

The sequence is that of UPF0434 protein RHECIAT_CH0004260 from Rhizobium etli (strain CIAT 652).